A 179-amino-acid polypeptide reads, in one-letter code: uncharacterized protein (179 aa).

Belongs to the CAPAB/TerDEXZ family.

This is an uncharacterized protein from Synechocystis sp. (strain ATCC 27184 / PCC 6803 / Kazusa).